Here is a 137-residue protein sequence, read N- to C-terminus: Prefoldin subunit alpha (137 aa).

The protein belongs to the prefoldin subunit alpha family. In terms of assembly, heterohexamer of two alpha and four beta subunits.

It is found in the cytoplasm. In terms of biological role, molecular chaperone capable of stabilizing a range of proteins. Seems to fulfill an ATP-independent, HSP70-like function in archaeal de novo protein folding. This is Prefoldin subunit alpha (pfdA) from Archaeoglobus fulgidus (strain ATCC 49558 / DSM 4304 / JCM 9628 / NBRC 100126 / VC-16).